The primary structure comprises 290 residues: MLKDLFSKKKKYATIPSEQAKQDVPEGIMTKCPKCKKIMYTKELVKNLRVCISCGYHHPMSAPERIGCLLDEGTFQEYDRHLLSKNPLEFPQYMEKIEEDREKTKLNEAVVTGEGTINGFPVVIAVMDSRFRMGSMGSVVGEKIARAIERAMEKSVPFIIFTASGGARMQEGVLSLMQMAKTSAALKLFSEQGGLIISVMTHPTTGGVSASFASLGDYNFAEPGALIGFAGRRVIEQTVREELPDDFQTAEFLLKHGQLDAVIPRHELKDTLTNVLDIHQSRGGDEWHTN.

The region spanning 28 to 290 is the CoA carboxyltransferase N-terminal domain; it reads IMTKCPKCKK…SRGGDEWHTN (263 aa). Residues Cys32, Cys35, Cys51, and Cys54 each coordinate Zn(2+). The C4-type zinc finger occupies 32–54; sequence CPKCKKIMYTKELVKNLRVCISC.

It belongs to the AccD/PCCB family. In terms of assembly, acetyl-CoA carboxylase is a heterohexamer composed of biotin carboxyl carrier protein (AccB), biotin carboxylase (AccC) and two subunits each of ACCase subunit alpha (AccA) and ACCase subunit beta (AccD). Zn(2+) serves as cofactor.

The protein localises to the cytoplasm. It catalyses the reaction N(6)-carboxybiotinyl-L-lysyl-[protein] + acetyl-CoA = N(6)-biotinyl-L-lysyl-[protein] + malonyl-CoA. The protein operates within lipid metabolism; malonyl-CoA biosynthesis; malonyl-CoA from acetyl-CoA: step 1/1. In terms of biological role, component of the acetyl coenzyme A carboxylase (ACC) complex. Biotin carboxylase (BC) catalyzes the carboxylation of biotin on its carrier protein (BCCP) and then the CO(2) group is transferred by the transcarboxylase to acetyl-CoA to form malonyl-CoA. The protein is Acetyl-coenzyme A carboxylase carboxyl transferase subunit beta of Anoxybacillus flavithermus (strain DSM 21510 / WK1).